A 376-amino-acid polypeptide reads, in one-letter code: Putative clathrin assembly protein At1g25240 (376 aa).

The ENTH domain occupies 25 to 156 (KTSFRNPDLD…FFLSDQIRRR (132 aa)).

Its subcellular location is the membrane. It localises to the clathrin-coated pit. The protein resides in the golgi apparatus. The protein localises to the cytoplasmic vesicle. It is found in the clathrin-coated vesicle. In Arabidopsis thaliana (Mouse-ear cress), this protein is Putative clathrin assembly protein At1g25240.